The following is a 975-amino-acid chain: GPI inositol-deacylase (975 aa).

Residues Ser27–Ser47 form a helical membrane-spanning segment. A glycan (N-linked (GlcNAc...) asparagine) is linked at Asn49. The active site involves Ser210. Residues Asn276, Asn384, Asn407, Asn419, and Asn488 are each glycosylated (N-linked (GlcNAc...) asparagine). A helical transmembrane segment spans residues Leu655–Tyr675. The N-linked (GlcNAc...) asparagine glycan is linked to Asn696. 3 consecutive transmembrane segments (helical) span residues Leu699 to Thr719, Phe751 to Leu771, and Val818 to Val838. N-linked (GlcNAc...) asparagine glycosylation occurs at Asn867. 3 helical membrane-spanning segments follow: residues Val868–Phe888, Asn932–Ile952, and Leu955–Leu975.

Belongs to the GPI inositol-deacylase family.

It localises to the endoplasmic reticulum membrane. In terms of biological role, involved in inositol deacylation of GPI-anchored proteins which plays important roles in the quality control and ER-associated degradation of GPI-anchored proteins. In Kluyveromyces lactis (strain ATCC 8585 / CBS 2359 / DSM 70799 / NBRC 1267 / NRRL Y-1140 / WM37) (Yeast), this protein is GPI inositol-deacylase (BST1).